Here is a 134-residue protein sequence, read N- to C-terminus: ATP synthase epsilon chain, chloroplastic (134 aa).

It belongs to the ATPase epsilon chain family. In terms of assembly, F-type ATPases have 2 components, CF(1) - the catalytic core - and CF(0) - the membrane proton channel. CF(1) has five subunits: alpha(3), beta(3), gamma(1), delta(1), epsilon(1). CF(0) has three main subunits: a, b and c.

The protein localises to the plastid. The protein resides in the chloroplast thylakoid membrane. In terms of biological role, produces ATP from ADP in the presence of a proton gradient across the membrane. The sequence is that of ATP synthase epsilon chain, chloroplastic from Drimys granadensis.